The primary structure comprises 187 residues: MEKKETKNDAEKNNKQDNKSTKSQKKENLNLVNSDKKITELENEISNLKDLYLRKQAEFENFRKRLEKEKDNFVKFANETIMKDVVNFLDNLERAINSSRKSKDFDNLLTGISMIENEILSIFDKKYNLKKFGENGENFDPSRHEAISIEEKEDLKNPEIVEVYQKGYCYNDRILRTAKVKVAQSKN.

Residues 1–31 (MEKKETKNDAEKNNKQDNKSTKSQKKENLNL) form a disordered region.

This sequence belongs to the GrpE family. As to quaternary structure, homodimer.

The protein localises to the cytoplasm. In terms of biological role, participates actively in the response to hyperosmotic and heat shock by preventing the aggregation of stress-denatured proteins, in association with DnaK and GrpE. It is the nucleotide exchange factor for DnaK and may function as a thermosensor. Unfolded proteins bind initially to DnaJ; upon interaction with the DnaJ-bound protein, DnaK hydrolyzes its bound ATP, resulting in the formation of a stable complex. GrpE releases ADP from DnaK; ATP binding to DnaK triggers the release of the substrate protein, thus completing the reaction cycle. Several rounds of ATP-dependent interactions between DnaJ, DnaK and GrpE are required for fully efficient folding. This chain is Protein GrpE, found in Borrelia garinii subsp. bavariensis (strain ATCC BAA-2496 / DSM 23469 / PBi) (Borreliella bavariensis).